The chain runs to 78 residues: Surfactant-associated protein 2 (78 aa).

A signal peptide spans 1–19 (MGAGLPLVLLLTLVGSSQG). A glycan (N-linked (GlcNAc...) asparagine) is linked at asparagine 37.

In terms of processing, N-glycosylated.

It localises to the secreted. Its subcellular location is the cytoplasmic vesicle. The protein resides in the secretory vesicle. It is found in the golgi apparatus. Its function is as follows. Putative surfactant protein. The protein is Surfactant-associated protein 2 (SFTA2) of Bos taurus (Bovine).